Here is a 242-residue protein sequence, read N- to C-terminus: MAPK-interacting and spindle-stabilizing protein-like (242 aa).

Disordered stretches follow at residues 1–145 (MSDE…SLGP) and 192–242 (PPGA…HSYH). Ser2 is subject to N-acetylserine. Ser2, Ser6, and Ser15 each carry phosphoserine. The span at 13 to 29 (EQSSAKPPAVTNTKAGH) shows a compositional bias: polar residues. The span at 30-43 (SSQGWPGSSPWSNP) shows a compositional bias: low complexity. Pro residues-rich tracts occupy residues 44 to 53 (SAPPAMPSGL) and 75 to 114 (SMPP…PGPT). Positions 192–210 (PPGAWGPAAPYPGPAGSYP) are enriched in low complexity.

This sequence belongs to the MISS family.

This chain is MAPK-interacting and spindle-stabilizing protein-like (Mapk1ip1l), found in Mus musculus (Mouse).